We begin with the raw amino-acid sequence, 127 residues long: Aspartate 1-decarboxylase (127 aa).

Serine 25 (schiff-base intermediate with substrate; via pyruvic acid) is an active-site residue. A Pyruvic acid (Ser) modification is found at serine 25. Threonine 57 lines the substrate pocket. The active-site Proton donor is tyrosine 58. 73–75 (GAA) contributes to the substrate binding site.

This sequence belongs to the PanD family. As to quaternary structure, heterooctamer of four alpha and four beta subunits. Pyruvate is required as a cofactor. In terms of processing, is synthesized initially as an inactive proenzyme, which is activated by self-cleavage at a specific serine bond to produce a beta-subunit with a hydroxyl group at its C-terminus and an alpha-subunit with a pyruvoyl group at its N-terminus.

It is found in the cytoplasm. It carries out the reaction L-aspartate + H(+) = beta-alanine + CO2. The protein operates within cofactor biosynthesis; (R)-pantothenate biosynthesis; beta-alanine from L-aspartate: step 1/1. In terms of biological role, catalyzes the pyruvoyl-dependent decarboxylation of aspartate to produce beta-alanine. The chain is Aspartate 1-decarboxylase from Bacillus pumilus (strain SAFR-032).